Here is a 260-residue protein sequence, read N- to C-terminus: Thymidylate synthase (260 aa).

Residue Arg21 coordinates dUMP. His51 serves as a coordination point for (6R)-5,10-methylene-5,6,7,8-tetrahydrofolate. A dUMP-binding site is contributed by 122-123; that stretch reads RR. Cys142 (nucleophile) is an active-site residue. DUMP is bound by residues 162 to 165, Asn173, and 203 to 205; these read RSAD and HLY. Residue Asp165 coordinates (6R)-5,10-methylene-5,6,7,8-tetrahydrofolate. Ala259 lines the (6R)-5,10-methylene-5,6,7,8-tetrahydrofolate pocket.

Belongs to the thymidylate synthase family. Bacterial-type ThyA subfamily. Homodimer.

The protein resides in the cytoplasm. It catalyses the reaction dUMP + (6R)-5,10-methylene-5,6,7,8-tetrahydrofolate = 7,8-dihydrofolate + dTMP. Its pathway is pyrimidine metabolism; dTTP biosynthesis. Its function is as follows. Catalyzes the reductive methylation of 2'-deoxyuridine-5'-monophosphate (dUMP) to 2'-deoxythymidine-5'-monophosphate (dTMP) while utilizing 5,10-methylenetetrahydrofolate (mTHF) as the methyl donor and reductant in the reaction, yielding dihydrofolate (DHF) as a by-product. This enzymatic reaction provides an intracellular de novo source of dTMP, an essential precursor for DNA biosynthesis. The protein is Thymidylate synthase of Methylococcus capsulatus (strain ATCC 33009 / NCIMB 11132 / Bath).